A 424-amino-acid chain; its full sequence is Arginine biosynthesis bifunctional protein ArgJ (424 aa).

Residues threonine 172, lysine 198, threonine 209, glutamate 296, asparagine 419, and serine 424 each coordinate substrate. Threonine 209 acts as the Nucleophile in catalysis.

Belongs to the ArgJ family. As to quaternary structure, heterotetramer of two alpha and two beta chains.

It is found in the cytoplasm. The enzyme catalyses N(2)-acetyl-L-ornithine + L-glutamate = N-acetyl-L-glutamate + L-ornithine. It carries out the reaction L-glutamate + acetyl-CoA = N-acetyl-L-glutamate + CoA + H(+). Its pathway is amino-acid biosynthesis; L-arginine biosynthesis; L-ornithine and N-acetyl-L-glutamate from L-glutamate and N(2)-acetyl-L-ornithine (cyclic): step 1/1. It functions in the pathway amino-acid biosynthesis; L-arginine biosynthesis; N(2)-acetyl-L-ornithine from L-glutamate: step 1/4. Its function is as follows. Catalyzes two activities which are involved in the cyclic version of arginine biosynthesis: the synthesis of N-acetylglutamate from glutamate and acetyl-CoA as the acetyl donor, and of ornithine by transacetylation between N(2)-acetylornithine and glutamate. This chain is Arginine biosynthesis bifunctional protein ArgJ, found in Gluconobacter oxydans (strain 621H) (Gluconobacter suboxydans).